The following is a 403-amino-acid chain: Argininosuccinate synthase (403 aa).

ATP contacts are provided by residues 10-18 (AYSGGVDTS) and Ala38. Tyr89 is an L-citrulline binding site. Gly119 contributes to the ATP binding site. Residues Thr121, Asn125, and Asp126 each contribute to the L-aspartate site. Asn125 is an L-citrulline binding site. Arg129, Ser177, Ser186, Glu262, and Tyr274 together coordinate L-citrulline.

It belongs to the argininosuccinate synthase family. Type 1 subfamily. In terms of assembly, homotetramer.

The protein localises to the cytoplasm. The enzyme catalyses L-citrulline + L-aspartate + ATP = 2-(N(omega)-L-arginino)succinate + AMP + diphosphate + H(+). It functions in the pathway amino-acid biosynthesis; L-arginine biosynthesis; L-arginine from L-ornithine and carbamoyl phosphate: step 2/3. The sequence is that of Argininosuccinate synthase from Parasynechococcus marenigrum (strain WH8102).